The primary structure comprises 589 residues: MYIGAFQDTLFVDMLEYFGWVTVGKEYLDIYRPNGVPVAPNAVAASISGKEEMKQDNQTSTDSMSTSTQQETDASNEDIERAMDTDNGLDKAMSGGQGVFGTEEDDSSTKDASKPEEADPFLVEFLGEDDPRKPWNWSFSKKTFVIVQLMVLTCINYMGSSIYTPGQEQIQHEFHVGHVVGTLNLSMYVLGYAIGPIIFSPLSEVSSIGRMPLYLWTFILFTILQVACALVRNIAGLVILRFITGILCSPVLATGGASVGDVCFPRYVPRFLGAWAVGAVAAPVMAPILGAAMVVAKDWRWIFWLMLFMCGATLLSIIFFFPETSHECILHRRAKRLRKLTGDDRYYTKKEKQEEALPVSVFIKNTLWRPIKMIALEPIILAFDVYIALCYGAFYLFFEAFPIVFAGIYHFTLVEVGLAFLGFCVGCVFAYTALIIFQEKVIRKKFLEGKFRPELFLILAMCLGWCLPFSLFFFGWTARIHWILPIIAELFFVLSVFNLFQATFSYLAVCYPEYVASVFAGNGLCRGAFAAAFPLFGKAMYDRLSTKKYPVAWGSTLIGFITVVLSLIPFVLYKYGPALRARSRFSPDS.

Residues 50-116 form a disordered region; the sequence is KEEMKQDNQT…SSTKDASKPE (67 aa). Positions 56 to 73 are enriched in low complexity; that stretch reads DNQTSTDSMSTSTQQETD. The N-linked (GlcNAc...) asparagine glycan is linked to Asn57. Residues 107–116 show a composition bias toward basic and acidic residues; it reads SSTKDASKPE. A glycan (N-linked (GlcNAc...) asparagine) is linked at Asn136. A run of 12 helical transmembrane segments spans residues 143 to 163, 179 to 199, 211 to 231, 234 to 254, 275 to 295, 301 to 321, 378 to 398, 417 to 437, 455 to 475, 480 to 500, 516 to 536, and 551 to 571; these read TFVI…SSIY, VVGT…PIIF, MPLY…CALV, IAGL…VLAT, WAVG…AMVV, WIFW…IFFF, PIIL…YLFF, GLAF…LIIF, LFLI…FFFG, IHWI…FNLF, ASVF…FPLF, and VAWG…IPFV.

This sequence belongs to the major facilitator superfamily.

Its subcellular location is the cell membrane. Multidrug transporter that confers resistance to 5-flucytosine (5-FC) and clotrimazole. Further confers azole drug resistance. Plays direct roles in extrusion of 5-flucytosine and clotrimazole. In Candida glabrata (strain ATCC 2001 / BCRC 20586 / JCM 3761 / NBRC 0622 / NRRL Y-65 / CBS 138) (Yeast), this protein is Multidrug transporter FLR2.